Consider the following 31-residue polypeptide: Cyclotide psybry C (31 aa).

The segment at residues 1–31 (GFNPCGETCQIDQTCHAPGCTCSIANICVRN) is a cross-link (cyclopeptide (Gly-Asn)). 3 disulfides stabilise this stretch: Cys-5-Cys-20, Cys-9-Cys-22, and Cys-15-Cys-28.

Post-translationally, this is a cyclic peptide.

In terms of biological role, probably participates in a plant defense mechanism. The polypeptide is Cyclotide psybry C (Psychotria brachyceras).